A 233-amino-acid polypeptide reads, in one-letter code: Small ribosomal subunit protein uS3 (233 aa).

A KH type-2 domain is found at 39-107 (VRQFLNKELE…PAQINIAEVR (69 aa)).

The protein belongs to the universal ribosomal protein uS3 family. Part of the 30S ribosomal subunit. Forms a tight complex with proteins S10 and S14.

Its function is as follows. Binds the lower part of the 30S subunit head. Binds mRNA in the 70S ribosome, positioning it for translation. The protein is Small ribosomal subunit protein uS3 of Edwardsiella ictaluri (strain 93-146).